We begin with the raw amino-acid sequence, 582 residues long: Trans-ocimene synthase, chloroplastic (582 aa).

The N-terminal 35 residues, 1-35, are a transit peptide targeting the chloroplast; that stretch reads MSLIIQSLPHWSRIPPRPPQLSQFQNSSRPKPLIQ. Arginine 296, aspartate 333, aspartate 337, arginine 474, and aspartate 477 together coordinate (2E)-geranyl diphosphate. Mg(2+) is bound by residues aspartate 333 and aspartate 337. The DDXXD motif motif lies at 333–337; that stretch reads DDIYD. Residues aspartate 477, threonine 481, and glutamate 485 each coordinate Mg(2+).

Belongs to the terpene synthase family. Tpsb subfamily. In terms of assembly, monomer. Mg(2+) is required as a cofactor. It depends on Mn(2+) as a cofactor. Expressed in male and female leaves. Barely detectable in fruits and shoots.

It is found in the plastid. The protein resides in the chloroplast. The catalysed reaction is (2E)-geranyl diphosphate = (E)-beta-ocimene + diphosphate. It functions in the pathway secondary metabolite biosynthesis; terpenoid biosynthesis. In terms of biological role, monoterpene synthase (TPS) involved in the biosynthesis of monoterpene natural products used by traditional Chinese medicine to treat headache, inflammation and intoxication. Catalyzes the conversion of (2E)-geranyl diphosphate (GPP) into (E)-beta-ocimene. This Litsea cubeba (Aromatic litsea) protein is Trans-ocimene synthase, chloroplastic.